The primary structure comprises 1337 residues: Multidrug resistance protein fer6 (1337 aa).

The N-terminal stretch at 1-23 (MTPEASANWFSLCWFAWIDPILT) is a signal peptide. A glycan (N-linked (GlcNAc...) asparagine) is linked at asparagine 71. 2 consecutive transmembrane segments (helical) span residues 94 to 114 (FWIG…SPLL) and 138 to 158 (LGSG…CVFL). The region spanning 95–386 (WIGGLLKLLA…LPIAWNAIVD (292 aa)) is the ABC transmembrane type-1 1 domain. Asparagine 187 carries an N-linked (GlcNAc...) asparagine glycan. Transmembrane regions (helical) follow at residues 220–242 (FFHM…IWSL), 247–269 (LPGI…RLFA), 331–351 (ALAF…YALV), and 359–379 (ILFS…FLPI). In terms of domain architecture, ABC transporter 1 spans 417–667 (IQLEDASFTW…KGRVAELLLT (251 aa)). The segment at 432–460 (ADTAKPVNEKKGQDSPSNEKETPVDRAST) is disordered. Basic and acidic residues predominate over residues 438 to 455 (VNEKKGQDSPSNEKETPV). Asparagine 465 carries an N-linked (GlcNAc...) asparagine glycan. Position 478–485 (478–485 (GGVGSGKS)) interacts with ATP. Positions 699-751 (GSASNRNSEASESTTTTVNAESKDTSNAEGVTNKTEKKDLVAPPAQAKSKALM) are disordered. Positions 700–718 (SASNRNSEASESTTTTVNA) are enriched in low complexity. Asparagine 731 carries N-linked (GlcNAc...) asparagine glycosylation. 6 helical membrane-spanning segments follow: residues 769 to 789 (YLNA…VLVF), 817 to 837 (GIYA…GVIF), 890 to 909 (AMRT…VLIA), 915 to 933 (FLIP…AAYY), 999 to 1019 (LSVR…ILVV), and 1028 to 1048 (GETG…GWMI). The ABC transmembrane type-1 2 domain maps to 781–1056 (LFLVAVLVFQ…MIRHAAELEN (276 aa)). Asparagine 1057 is a glycosylation site (N-linked (GlcNAc...) asparagine). The region spanning 1097-1325 (IRFEGVEAKY…EKGAFRALCD (229 aa)) is the ABC transporter 2 domain. Residue 1131–1138 (GRTGAGKS) coordinates ATP. Asparagine 1227 carries an N-linked (GlcNAc...) asparagine glycan.

Belongs to the ABC transporter superfamily. ABCC family. Conjugate transporter (TC 3.A.1.208) subfamily.

It localises to the membrane. In terms of biological role, multidrug resistance protein; part of the gene cluster that mediates the biosynthesis of siderophore ferrichrome A which is contributing to organismal virulence. This Mycosarcoma maydis (Corn smut fungus) protein is Multidrug resistance protein fer6.